A 616-amino-acid chain; its full sequence is Chaperone protein HscA (616 aa).

Belongs to the heat shock protein 70 family.

Functionally, chaperone involved in the maturation of iron-sulfur cluster-containing proteins. Has a low intrinsic ATPase activity which is markedly stimulated by HscB. Involved in the maturation of IscU. In Citrobacter koseri (strain ATCC BAA-895 / CDC 4225-83 / SGSC4696), this protein is Chaperone protein HscA.